The following is a 329-amino-acid chain: 4-hydroxythreonine-4-phosphate dehydrogenase (329 aa).

Substrate contacts are provided by histidine 136 and threonine 137. A divalent metal cation contacts are provided by histidine 166, histidine 211, and histidine 266. The substrate site is built by lysine 274, asparagine 283, and arginine 292.

This sequence belongs to the PdxA family. As to quaternary structure, homodimer. Requires Zn(2+) as cofactor. Mg(2+) serves as cofactor. Co(2+) is required as a cofactor.

It is found in the cytoplasm. The enzyme catalyses 4-(phosphooxy)-L-threonine + NAD(+) = 3-amino-2-oxopropyl phosphate + CO2 + NADH. Its pathway is cofactor biosynthesis; pyridoxine 5'-phosphate biosynthesis; pyridoxine 5'-phosphate from D-erythrose 4-phosphate: step 4/5. Functionally, catalyzes the NAD(P)-dependent oxidation of 4-(phosphooxy)-L-threonine (HTP) into 2-amino-3-oxo-4-(phosphooxy)butyric acid which spontaneously decarboxylates to form 3-amino-2-oxopropyl phosphate (AHAP). In Escherichia coli O81 (strain ED1a), this protein is 4-hydroxythreonine-4-phosphate dehydrogenase.